The following is a 514-amino-acid chain: JmjC domain-containing histone demethylation protein 1 (514 aa).

A PHD-type zinc finger spans residues 4–62 (IDTCPICVESPLEDSTTFNNIAWLQCDICNQWFHASCLKIPKIEVNNLHSYHCEGCSKS). The JmjC domain occupies 220–384 (SDVDSFGKSF…MHLRIYEIEK (165 aa)). Thr-267 lines the substrate pocket. Residues His-270 and Asp-272 each contribute to the Fe cation site. Lys-287 provides a ligand contact to substrate. His-352 contacts Fe cation. Residues 432 to 454 (KSEAHSRGEVHTKTETHAVKDEP) show a composition bias toward basic and acidic residues. Residues 432–456 (KSEAHSRGEVHTKTETHAVKDEPQP) are disordered.

It belongs to the JHDM1 histone demethylase family. Requires Fe(2+) as cofactor.

Its subcellular location is the nucleus. It carries out the reaction N(6),N(6)-dimethyl-L-lysyl(36)-[histone H3] + 2 2-oxoglutarate + 2 O2 = L-lysyl(36)-[histone H3] + 2 formaldehyde + 2 succinate + 2 CO2. Its function is as follows. Histone demethylase that specifically demethylates 'Lys-36' of histone H3, thereby playing a central role in histone code. The polypeptide is JmjC domain-containing histone demethylation protein 1 (JHD1) (Debaryomyces hansenii (strain ATCC 36239 / CBS 767 / BCRC 21394 / JCM 1990 / NBRC 0083 / IGC 2968) (Yeast)).